Reading from the N-terminus, the 318-residue chain is 2-keto-3-deoxygluconate permease (318 aa).

The next 10 helical transmembrane spans lie at 10 to 30, 42 to 62, 82 to 102, 109 to 129, 139 to 159, 163 to 183, 201 to 221, 224 to 244, 257 to 277, and 289 to 309; these read LPGG…TLWP, GLIS…GATI, IAVA…GGVS, LSVL…YAAL, AGAV…LILG, LASF…LGFA, TLVP…TIAH, TSGV…LLLA, VAAS…AGMA, and ALVA…TALY.

It belongs to the KdgT transporter family.

The protein localises to the cell inner membrane. It carries out the reaction 2-dehydro-3-deoxy-D-gluconate(in) + H(+)(in) = 2-dehydro-3-deoxy-D-gluconate(out) + H(+)(out). Catalyzes the proton-dependent uptake of 2-keto-3-deoxygluconate (KDG) into the cell. This chain is 2-keto-3-deoxygluconate permease, found in Xanthomonas axonopodis pv. citri (strain 306).